Here is a 367-residue protein sequence, read N- to C-terminus: WD repeat-containing protein 31 (367 aa).

WD repeat units follow at residues 53–90, 94–132, 137–175, 179–217, 221–264, 269–311, and 315–353; these read AFQE…AYNW, NVVK…MWDL, QPRQ…LWDV, QSVE…LWDS, QVAH…LWDL, NRIC…IWNQ, and ACLF…LLRM.

The chain is WD repeat-containing protein 31 (WDR31) from Homo sapiens (Human).